The following is a 332-amino-acid chain: MDVQPLLKKLGEGKTLTVDEAYRLARGILLGELGEVEVAAALTAMSVRGETGEEVLGFVKMAREAAVRVPLEVDAIDTAGTGGDGAGTINLSTAAAIVAAAAGAKVLKHGNRSASGLFGSADFMEAVGYNLDLPPEKAARLVATVGFAFVFAPKYHPAFAKVAPVRRRLPFRTIFNVVGPLANPGCVKRQLVGVAEPRLLEVVGEALAGMGHVKALVVHGGGVDEVSTEGPTTVVEVRGFKLERYVVSPGDFGAPVTPLPRARSREEAVARALAGLRGEDREAAVAIAANAGFALYVADVVKDFRDGFELALKTIEEGAAYRKLVEAVEASR.

Residues glycine 80, 83–84 (GD), threonine 88, 90–93 (NLST), 108–116 (KHGNRSASG), and serine 120 contribute to the 5-phospho-alpha-D-ribose 1-diphosphate site. Glycine 80 contacts anthranilate. Serine 92 serves as a coordination point for Mg(2+). Asparagine 111 serves as a coordination point for anthranilate. Residue arginine 166 participates in anthranilate binding. Aspartate 224 and glutamate 225 together coordinate Mg(2+).

This sequence belongs to the anthranilate phosphoribosyltransferase family. As to quaternary structure, homodimer. Mg(2+) serves as cofactor.

The catalysed reaction is N-(5-phospho-beta-D-ribosyl)anthranilate + diphosphate = 5-phospho-alpha-D-ribose 1-diphosphate + anthranilate. Its pathway is amino-acid biosynthesis; L-tryptophan biosynthesis; L-tryptophan from chorismate: step 2/5. In terms of biological role, catalyzes the transfer of the phosphoribosyl group of 5-phosphorylribose-1-pyrophosphate (PRPP) to anthranilate to yield N-(5'-phosphoribosyl)-anthranilate (PRA). This Pyrobaculum calidifontis (strain DSM 21063 / JCM 11548 / VA1) protein is Anthranilate phosphoribosyltransferase.